The chain runs to 153 residues: Endoribonuclease YbeY (153 aa).

Zn(2+)-binding residues include His-114, His-118, and His-124.

It belongs to the endoribonuclease YbeY family. Requires Zn(2+) as cofactor.

The protein resides in the cytoplasm. Functionally, single strand-specific metallo-endoribonuclease involved in late-stage 70S ribosome quality control and in maturation of the 3' terminus of the 16S rRNA. The chain is Endoribonuclease YbeY from Shewanella baltica (strain OS195).